Reading from the N-terminus, the 448-residue chain is MPLYIHALACAFGLGSWVSINGLWVELPLIVNVLPEGWDLPSYLTVIIQFANLGPLLVTLAHKFCPGRLRENLAIYAVLSIGVVACILLAVFWNYTTVIFGQPRSTAFFILTFFLALVDCTSSVTFLPFMMQLPAKYITTYFIGEGLSGLVPGLVALAQGVGMSKCVNVTNVSDNVTDPGPSTFIVETQYLPPNFSTEIFFSFLAVMTTISLGAFLILNRLPRTFELSTENLVSDSDAVATVCRGLEDPMDPKTNCPEEVEQKQNEVLLPKPQHSSYQLAFIYVMVLWVNSATNGLLPSVQTFSCMPYGNMAYHLSAALSAVANPVACIIAMFFPKRSLVFLGILCLLGSTFGGYNMAMAAMSPCPLLQDTPLGDAIIVLSWVFFTGLLSYVKVMVGVILRDRSHSALVWCGAAVQTGSLLGSIIMFPLVNVYHLFKSGDICNTNCPL.

The next 3 membrane-spanning stretches (helical) occupy residues 11–31 (AFGLGSWVSINGLWVELPLIV), 40–60 (LPSYLTVIIQFANLGPLLVTL), and 73–93 (LAIYAVLSIGVVACILLAVFW). N-linked (GlcNAc...) asparagine glycosylation is present at N94. 2 consecutive transmembrane segments (helical) span residues 107–127 (AFFILTFFLALVDCTSSVTFL) and 138–158 (ITTYFIGEGLSGLVPGLVALA). N-linked (GlcNAc...) asparagine glycans are attached at residues N168, N171, N175, and N194. Transmembrane regions (helical) follow at residues 198–218 (EIFFSFLAVMTTISLGAFLIL), 280–300 (AFIYVMVLWVNSATNGLLPSV), 315–335 (LSAALSAVANPVACIIAMFFP), 339–359 (LVFLGILCLLGSTFGGYNMAM), 376–396 (AIIVLSWVFFTGLLSYVKVMV), and 407–427 (ALVWCGAAVQTGSLLGSIIMF).

This sequence belongs to the riboflavin transporter family.

The protein resides in the cell membrane. The enzyme catalyses riboflavin(in) = riboflavin(out). Functionally, plasma membrane transporter mediating the uptake by cells of the water soluble vitamin B2/riboflavin that plays a key role in biochemical oxidation-reduction reactions of the carbohydrate, lipid, and amino acid metabolism. This chain is Solute carrier family 52, riboflavin transporter, member 3-A (slc52a3a), found in Danio rerio (Zebrafish).